The sequence spans 487 residues: Glutamate--tRNA ligase (487 aa).

Residues 13–23 carry the 'HIGH' region motif; the sequence is PSPTGLFHIGG. The short motif at 255–259 is the 'KMSKS' region element; the sequence is KLSKR. Residue K258 coordinates ATP.

It belongs to the class-I aminoacyl-tRNA synthetase family. Glutamate--tRNA ligase type 1 subfamily. Monomer.

The protein resides in the cytoplasm. It catalyses the reaction tRNA(Glu) + L-glutamate + ATP = L-glutamyl-tRNA(Glu) + AMP + diphosphate. Its function is as follows. Catalyzes the attachment of glutamate to tRNA(Glu) in a two-step reaction: glutamate is first activated by ATP to form Glu-AMP and then transferred to the acceptor end of tRNA(Glu). The polypeptide is Glutamate--tRNA ligase (Malacoplasma penetrans (strain HF-2) (Mycoplasma penetrans)).